The following is a 214-amino-acid chain: Phosphoenolpyruvate guanylyltransferase (214 aa).

Phosphoenolpyruvate contacts are provided by threonine 148, glycine 163, and serine 166.

This sequence belongs to the CofC family.

The catalysed reaction is phosphoenolpyruvate + GTP + H(+) = enolpyruvoyl-2-diphospho-5'-guanosine + diphosphate. The protein operates within cofactor biosynthesis; coenzyme F420 biosynthesis. Guanylyltransferase that catalyzes the activation of phosphoenolpyruvate (PEP) as enolpyruvoyl-2-diphospho-5'-guanosine, via the condensation of PEP with GTP. It is involved in the biosynthesis of coenzyme F420, a hydride carrier cofactor. The protein is Phosphoenolpyruvate guanylyltransferase of Mycolicibacterium gilvum (strain PYR-GCK) (Mycobacterium gilvum (strain PYR-GCK)).